The primary structure comprises 71 residues: Beta-defensin 124 (71 aa).

Positions 1–22 (MTQLLLFLVALLVLGHVPSGRS) are cleaved as a signal peptide. Cystine bridges form between Cys27–Cys54, Cys34–Cys48, and Cys38–Cys55.

It belongs to the beta-defensin family.

The protein resides in the secreted. Functionally, has antibacterial activity. The polypeptide is Beta-defensin 124 (DEFB124) (Homo sapiens (Human)).